The chain runs to 317 residues: Melanocyte-stimulating hormone receptor (317 aa).

The Extracellular segment spans residues methionine 1 to glutamate 37. An N-linked (GlcNAc...) asparagine glycan is attached at asparagine 29. The chain crosses the membrane as a helical span at residues valine 38–valine 63. Residues alanine 64–serine 72 are Cytoplasmic-facing. Residues methionine 73 to leucine 93 form a helical membrane-spanning segment. Residues glutamate 94 to asparagine 118 are Extracellular-facing. The helical transmembrane segment at threonine 119–valine 140 threads the bilayer. Residues aspartate 141–arginine 163 are Cytoplasmic-facing. A helical membrane pass occupies residues alanine 164 to tyrosine 183. The Extracellular segment spans residues aspartate 184–cysteine 191. A helical transmembrane segment spans residues leucine 192–leucine 211. Topologically, residues alanine 212–alanine 240 are cytoplasmic. Residues alanine 241–phenylalanine 266 traverse the membrane as a helical segment. At cysteine 267–asparagine 279 the chain is on the extracellular side. A helical transmembrane segment spans residues phenylalanine 280–phenylalanine 300. Residues arginine 301–tryptophan 317 are Cytoplasmic-facing. The S-palmitoyl cysteine moiety is linked to residue cysteine 315.

This sequence belongs to the G-protein coupled receptor 1 family. As to quaternary structure, interacts with MGRN1, but does not undergo MGRN1-mediated ubiquitination; this interaction competes with GNAS-binding and thus inhibits agonist-induced cAMP production. Interacts with OPN3; the interaction results in a decrease in MC1R-mediated cAMP signaling and ultimately a decrease in melanin production in melanocytes.

It is found in the cell membrane. Its function is as follows. Receptor for MSH (alpha, beta and gamma) and ACTH. The activity of this receptor is mediated by G proteins which activate adenylate cyclase. Mediates melanogenesis, the production of eumelanin (black/brown) and phaeomelanin (red/yellow), via regulation of cAMP signaling in melanocytes. This chain is Melanocyte-stimulating hormone receptor (MC1R), found in Saguinus oedipus (Cotton-top tamarin).